The sequence spans 320 residues: o-succinylbenzoate synthase (320 aa).

Lys133 (proton donor) is an active-site residue. Asp161, Glu190, and Asp213 together coordinate Mg(2+). Lys235 serves as the catalytic Proton acceptor.

This sequence belongs to the mandelate racemase/muconate lactonizing enzyme family. MenC type 1 subfamily. A divalent metal cation serves as cofactor.

The enzyme catalyses (1R,6R)-6-hydroxy-2-succinyl-cyclohexa-2,4-diene-1-carboxylate = 2-succinylbenzoate + H2O. Its pathway is quinol/quinone metabolism; 1,4-dihydroxy-2-naphthoate biosynthesis; 1,4-dihydroxy-2-naphthoate from chorismate: step 4/7. It participates in quinol/quinone metabolism; menaquinone biosynthesis. Functionally, converts 2-succinyl-6-hydroxy-2,4-cyclohexadiene-1-carboxylate (SHCHC) to 2-succinylbenzoate (OSB). In Escherichia coli O6:K15:H31 (strain 536 / UPEC), this protein is o-succinylbenzoate synthase.